The sequence spans 344 residues: 5-formaminoimidazole-4-carboxamide-1-(beta)-D-ribofuranosyl 5'-monophosphate synthetase (344 aa).

Residues H31 and S96 each contribute to the 5-amino-1-(5-phospho-beta-D-ribosyl)imidazole-4-carboxamide site. The region spanning 130–324 is the ATP-grasp domain; the sequence is MELLQRAGVP…YFDRPMDMGE (195 aa). Residues 153–198 and E220 contribute to the ATP site; that span reads PVIV…VPAY. N240 serves as a coordination point for 5-amino-1-(5-phospho-beta-D-ribosyl)imidazole-4-carboxamide. Positions 279 and 292 each coordinate Mg(2+).

This sequence belongs to the phosphohexose mutase family. Requires Mg(2+) as cofactor. The cofactor is Mn(2+).

It carries out the reaction 5-amino-1-(5-phospho-beta-D-ribosyl)imidazole-4-carboxamide + formate + ATP = 5-formamido-1-(5-phospho-D-ribosyl)imidazole-4-carboxamide + ADP + phosphate. It participates in purine metabolism; IMP biosynthesis via de novo pathway; 5-formamido-1-(5-phospho-D-ribosyl)imidazole-4-carboxamide from 5-amino-1-(5-phospho-D-ribosyl)imidazole-4-carboxamide (formate route): step 1/1. Catalyzes the ATP- and formate-dependent formylation of 5-aminoimidazole-4-carboxamide-1-beta-d-ribofuranosyl 5'-monophosphate (AICAR) to 5-formaminoimidazole-4-carboxamide-1-beta-d-ribofuranosyl 5'-monophosphate (FAICAR) in the absence of folates. The sequence is that of 5-formaminoimidazole-4-carboxamide-1-(beta)-D-ribofuranosyl 5'-monophosphate synthetase from Pyrobaculum neutrophilum (strain DSM 2338 / JCM 9278 / NBRC 100436 / V24Sta) (Thermoproteus neutrophilus).